The following is a 156-amino-acid chain: ATP synthase subunit b (156 aa).

The chain crosses the membrane as a helical span at residues 11-31; that stretch reads AIAFAIFVMFCMKFVWPPLIG.

This sequence belongs to the ATPase B chain family. F-type ATPases have 2 components, F(1) - the catalytic core - and F(0) - the membrane proton channel. F(1) has five subunits: alpha(3), beta(3), gamma(1), delta(1), epsilon(1). F(0) has three main subunits: a(1), b(2) and c(10-14). The alpha and beta chains form an alternating ring which encloses part of the gamma chain. F(1) is attached to F(0) by a central stalk formed by the gamma and epsilon chains, while a peripheral stalk is formed by the delta and b chains.

It localises to the cell inner membrane. F(1)F(0) ATP synthase produces ATP from ADP in the presence of a proton or sodium gradient. F-type ATPases consist of two structural domains, F(1) containing the extramembraneous catalytic core and F(0) containing the membrane proton channel, linked together by a central stalk and a peripheral stalk. During catalysis, ATP synthesis in the catalytic domain of F(1) is coupled via a rotary mechanism of the central stalk subunits to proton translocation. Functionally, component of the F(0) channel, it forms part of the peripheral stalk, linking F(1) to F(0). This is ATP synthase subunit b from Psychrobacter cryohalolentis (strain ATCC BAA-1226 / DSM 17306 / VKM B-2378 / K5).